We begin with the raw amino-acid sequence, 236 residues long: Uridylate kinase (236 aa).

Residue 12 to 15 coordinates ATP; sequence KISG. The tract at residues 20 to 25 is involved in allosteric activation by GTP; sequence GKKGFG. Glycine 54 contributes to the UMP binding site. Residues glycine 55 and arginine 59 each contribute to the ATP site. UMP contacts are provided by residues aspartate 72 and 133-140; that span reads TGNPYFST. 2 residues coordinate ATP: tyrosine 166 and aspartate 169.

This sequence belongs to the UMP kinase family. Homohexamer.

Its subcellular location is the cytoplasm. The catalysed reaction is UMP + ATP = UDP + ADP. It participates in pyrimidine metabolism; CTP biosynthesis via de novo pathway; UDP from UMP (UMPK route): step 1/1. Its activity is regulated as follows. Allosterically activated by GTP. Inhibited by UTP. Its function is as follows. Catalyzes the reversible phosphorylation of UMP to UDP. This Clostridium novyi (strain NT) protein is Uridylate kinase.